Consider the following 464-residue polypeptide: Cell division protein FtsA (464 aa).

Positions 392 to 464 (EVIETDKDTE…FKKLMKSLFE (73 aa)) are disordered. Residues 416-455 (KKENDEVAPEAPREESYEDRENHLEDEQQTEGKAKEESKF) show a composition bias toward basic and acidic residues.

Belongs to the FtsA/MreB family. Self-interacts. Interacts with FtsZ.

Its subcellular location is the cell membrane. Cell division protein that is involved in the assembly of the Z ring. May serve as a membrane anchor for the Z ring. The sequence is that of Cell division protein FtsA from Staphylococcus epidermidis (strain ATCC 12228 / FDA PCI 1200).